Here is a 1907-residue protein sequence, read N- to C-terminus: Receptor-type tyrosine-protein phosphatase F (1907 aa).

The first 29 residues, 1–29 (MAPEPAPGRTMVPLVPALVMLGLVAGAHG), serve as a signal peptide directing secretion. Residues 30 to 1263 (DSKPVFIKVP…QQQEEPEMLW (1234 aa)) are Extracellular-facing. Ig-like C2-type domains lie at 33 to 123 (PVFI…AKLS), 135 to 224 (PSID…ANLY), and 232 to 314 (PRFS…AQVT). Cysteines 54 and 107 form a disulfide. 68–77 (KKGKKVSSQR) is a binding site for heparin. A glycan (N-linked (GlcNAc...) asparagine) is linked at Asn117. A disulfide bond links Cys156 and Cys207. N-linked (GlcNAc...) asparagine glycans are attached at residues Asn250 and Asn295. A disulfide bridge links Cys253 with Cys298. Fibronectin type-III domains are found at residues 321–411 (PPID…TGEQ), 416–510 (PPRR…TQQG), 514–604 (QPAD…TAQS), 609–706 (PPQK…TDED), 711–819 (PPRK…TTGA), 820–914 (VPGR…PEDL), 918–1010 (FPQN…TMPV), and 1014–1098 (FAKN…TAPD). The interval 398–417 (GPPSEAVRARTGEQAPSSPP) is disordered. The tract at residues 693 to 712 (GPESSPVLVRTDEDVPSGPP) is disordered. Asn721 is a glycosylation site (N-linked (GlcNAc...) asparagine). Asn966 is a glycosylation site (N-linked (GlcNAc...) asparagine). A helical transmembrane segment spans residues 1264–1284 (VTGPVLAVILIILIVIAILLF). The Cytoplasmic segment spans residues 1285-1907 (KRKRTHSPSS…YLGSFDHYAT (623 aa)). Ser1305 carries the post-translational modification Phosphoserine. 2 Tyrosine-protein phosphatase domains span residues 1352–1607 (FSQE…LLEA) and 1639–1898 (MELE…ALEY). Substrate is bound by residues Asp1516, 1548 to 1554 (CSAGVGR), and Gln1592. Cys1548 (phosphocysteine intermediate) is an active-site residue. The active-site Phosphocysteine intermediate is Cys1839.

This sequence belongs to the protein-tyrosine phosphatase family. Receptor class 2A subfamily. Interacts with GRIP1. Interacts with PPFIA1, PPFIA2 and PPFIA3. Interacts with INSR.

It is found in the membrane. It carries out the reaction O-phospho-L-tyrosyl-[protein] + H2O = L-tyrosyl-[protein] + phosphate. Functionally, possible cell adhesion receptor. It possesses an intrinsic protein tyrosine phosphatase activity (PTPase) and dephosphorylates EPHA2 regulating its activity. In terms of biological role, the first PTPase domain has enzymatic activity, while the second one seems to affect the substrate specificity of the first one. The sequence is that of Receptor-type tyrosine-protein phosphatase F (PTPRF) from Homo sapiens (Human).